Reading from the N-terminus, the 156-residue chain is Oleosin Zm-I (156 aa).

A disordered region spans residues 1–30 (MADHHRGATGGGGGYGDLQRGGGMHGEAQQ). Residue alanine 2 is modified to N-acetylalanine. Residues 2–42 (ADHHRGATGGGGGYGDLQRGGGMHGEAQQQQKQGAMMTALK) are polar. Residues 8–25 (ATGGGGGYGDLQRGGGMH) show a composition bias toward gly residues. The tract at residues 43–114 (AATAATFGGS…AALSVFSWMY (72 aa)) is hydrophobic. The next 2 membrane-spanning stretches (helical) occupy residues 51–71 (GSMLVLSGLILAGTVIALTVA) and 95–115 (GFVTSGGLGVAALSVFSWMYK).

Belongs to the oleosin family. The N-terminus is blocked.

It is found in the lipid droplet. Its subcellular location is the membrane. In terms of biological role, may have a structural role to stabilize the lipid body during desiccation of the seed by preventing coalescence of the oil. Probably interacts with both lipid and phospholipid moieties of lipid bodies. May also provide recognition signals for specific lipase anchorage in lipolysis during seedling growth. The sequence is that of Oleosin Zm-I (OLE16) from Zea mays (Maize).